We begin with the raw amino-acid sequence, 366 residues long: UDP-N-acetylglucosamine--N-acetylmuramyl-(pentapeptide) pyrophosphoryl-undecaprenol N-acetylglucosamine transferase (366 aa).

Residues 17-19, N129, R169, S195, I251, 270-275, and Q296 contribute to the UDP-N-acetyl-alpha-D-glucosamine site; these read TGG and ALTVSE.

It belongs to the glycosyltransferase 28 family. MurG subfamily.

It is found in the cell inner membrane. It carries out the reaction di-trans,octa-cis-undecaprenyl diphospho-N-acetyl-alpha-D-muramoyl-L-alanyl-D-glutamyl-meso-2,6-diaminopimeloyl-D-alanyl-D-alanine + UDP-N-acetyl-alpha-D-glucosamine = di-trans,octa-cis-undecaprenyl diphospho-[N-acetyl-alpha-D-glucosaminyl-(1-&gt;4)]-N-acetyl-alpha-D-muramoyl-L-alanyl-D-glutamyl-meso-2,6-diaminopimeloyl-D-alanyl-D-alanine + UDP + H(+). The protein operates within cell wall biogenesis; peptidoglycan biosynthesis. In terms of biological role, cell wall formation. Catalyzes the transfer of a GlcNAc subunit on undecaprenyl-pyrophosphoryl-MurNAc-pentapeptide (lipid intermediate I) to form undecaprenyl-pyrophosphoryl-MurNAc-(pentapeptide)GlcNAc (lipid intermediate II). The polypeptide is UDP-N-acetylglucosamine--N-acetylmuramyl-(pentapeptide) pyrophosphoryl-undecaprenol N-acetylglucosamine transferase (Shewanella denitrificans (strain OS217 / ATCC BAA-1090 / DSM 15013)).